Consider the following 238-residue polypeptide: tRNA1(Val) (adenine(37)-N6)-methyltransferase (238 aa).

It belongs to the methyltransferase superfamily. tRNA (adenine-N(6)-)-methyltransferase family.

It localises to the cytoplasm. It carries out the reaction adenosine(37) in tRNA1(Val) + S-adenosyl-L-methionine = N(6)-methyladenosine(37) in tRNA1(Val) + S-adenosyl-L-homocysteine + H(+). Its function is as follows. Specifically methylates the adenine in position 37 of tRNA(1)(Val) (anticodon cmo5UAC). The polypeptide is tRNA1(Val) (adenine(37)-N6)-methyltransferase (Shewanella baltica (strain OS195)).